Consider the following 122-residue polypeptide: uncharacterized protein (122 aa).

Positions Thr-97–Ser-122 are disordered.

This is an uncharacterized protein from Mycoplasma genitalium (strain ATCC 33530 / DSM 19775 / NCTC 10195 / G37) (Mycoplasmoides genitalium).